The primary structure comprises 387 residues: Pepsin-3 (387 aa).

The N-terminal stretch at 1–15 (MKWLLLLGLLALSEC) is a signal peptide. Positions 16–59 (IIHKVPLVRKKSLRKNLIEKGLLKDYLKTHTPNLATKYLPKAAF) are cleaved as a propeptide — activation peptide. In terms of domain architecture, Peptidase A1 spans 75–384 (YFGTIGIGTP…DRANNQLGLA (310 aa)). Asp93 is an active-site residue. Cystine bridges form between Cys106-Cys111 and Cys267-Cys271. Asp276 is a catalytic residue. Cys310 and Cys343 are disulfide-bonded.

It belongs to the peptidase A1 family.

Its subcellular location is the secreted. The catalysed reaction is Preferential cleavage: hydrophobic, preferably aromatic, residues in P1 and P1' positions. Cleaves 1-Phe-|-Val-2, 4-Gln-|-His-5, 13-Glu-|-Ala-14, 14-Ala-|-Leu-15, 15-Leu-|-Tyr-16, 16-Tyr-|-Leu-17, 23-Gly-|-Phe-24, 24-Phe-|-Phe-25 and 25-Phe-|-Tyr-26 bonds in the B chain of insulin.. In terms of biological role, shows particularly broad specificity; although bonds involving phenylalanine and leucine are preferred, many others are also cleaved to some extent. In Oryctolagus cuniculus (Rabbit), this protein is Pepsin-3.